The primary structure comprises 978 residues: MRGARGAWDFLFVLLLLLLVQTGSSQPSVSPGELSLPSIHPAKSELIVSVGDEIRLLCTDPGFVKWTFEILGQLSEKTNPEWITEKAEATNTGNYTCTNKGGLSSSIYVFVRDPEKLFLIDLPLYGKEENDTLVRCPLTDPEVTNYSLTGCEGKPLPKDLTFVADPKAGITIRNVKREYHRLCLHCSANQKGKSMLSKKFTLKVRAAIKAVPVVSVSKTSYLLREGEEFAVTCLIKDVSSSVDSMWIKENSQQSKAQTKKNSWHQGDFSYLRQERLTISSARVNDSGVFMCYANNTFGSANVTTTLEVVDKGFINIFPMMNTTVFVNDGENVDLVVEYEAYPKPEHRQWIYMNRTSTDKWDDYPKSENESNIRYVNELHLTRLKGTEGGTYTFHVSNSDVNSSVTFNVNVNTKPEILTHDRLVNGMLQCVAAGFPEPTIDWYFCPGTEQRCSVPVGPVDVQIQNSSVSPFGKLVVYSTIDDSTFKHNGTVECRAYNDVGKSSASFNFAFKGNNKEQIHAHTLFTPLLIGFVIAAGLMCIFVMILTYKYLQKPMYEVQWKVVEEINGNNYVYIDPTQLPYDHKWEFPRNRLSFGKTLGAGAFGKVVEATAYGLIKSDAAMTVAVKMLKPSAHLTEREALMSELKVLSYLGNHMNIVNLLGACTIGGPTLVITEYCCYGDLLNFLRRKRDSFICSKQEDHAEVALYKNLLHSKESSCNDSTNEYMDMKPGVSYVVPTKAADKRRSARIGSYIERDVTPAIMEDDELALDLEDLLSFSYQVAKGMAFLASKNCIHRDLAARNILLTHGRITKICDFGLARDIKNDSNYVVKGNARLPVKWMAPESIFNCVYTFESDVWSYGIFLWELFSLGSSPYPGMPVDSKFYKMIKEGFRMLSPEHAPAEMYDIMKTCWDADPLKRPTFKQIVQLIEKQISESTNHIYSNLANCSPHRENPAVDHSVRINSVGSSASSTQPLLVHEDV.

A signal peptide spans 1-25 (MRGARGAWDFLFVLLLLLLVQTGSS). At 26 to 525 (QPSVSPGELS…QIHAHTLFTP (500 aa)) the chain is on the extracellular side. Ig-like C2-type domains are found at residues 27 to 112 (PSVS…VFVR), 121 to 205 (DLPL…LKVR), 212 to 309 (PVVS…LEVV), 318 to 411 (PMMN…VNVN), and 414 to 508 (PEIL…FNFA). A disulfide bond links cysteine 58 and cysteine 97. Asparagine 94, asparagine 130, and asparagine 145 each carry an N-linked (GlcNAc...) asparagine glycan. 3 disulfide bridges follow: cysteine 136/cysteine 186, cysteine 151/cysteine 183, and cysteine 233/cysteine 291. N-linked (GlcNAc...) asparagine glycans are attached at residues asparagine 284, asparagine 294, asparagine 301, asparagine 321, asparagine 353, asparagine 368, asparagine 401, asparagine 464, and asparagine 487. Residues cysteine 429 and cysteine 492 are joined by a disulfide bond. A helical membrane pass occupies residues 526 to 546 (LLIGFVIAAGLMCIFVMILTY). Topologically, residues 547–978 (KYLQKPMYEV…TQPLLVHEDV (432 aa)) are cytoplasmic. Tyrosine 548 and tyrosine 554 each carry phosphotyrosine. Mg(2+) is bound at residue tyrosine 569. Phosphotyrosine; by autocatalysis is present on residues tyrosine 569 and tyrosine 571. The interval 569–571 (YVY) is important for interaction with phosphotyrosine-binding proteins. One can recognise a Protein kinase domain in the interval 590-939 (LSFGKTLGAG…ISESTNHIYS (350 aa)). Residues 597 to 604 (GAGAFGKV), lysine 624, and 672 to 678 (EYCCYGD) contribute to the ATP site. Phosphotyrosine; by autocatalysis occurs at positions 704 and 722. A Phosphotyrosine modification is found at tyrosine 731. 2 positions are modified to phosphoserine; by PKC/PRKCA: serine 743 and serine 748. The Proton acceptor role is filled by aspartate 794. Arginine 798 is an ATP binding site. 2 residues coordinate Mg(2+): asparagine 799 and aspartate 812. Position 823 is a phosphoserine (serine 823). Tyrosine 825 carries the post-translational modification Phosphotyrosine; by autocatalysis. A Phosphoserine modification is found at serine 893. Tyrosine 902 carries the phosphotyrosine modification. Tyrosine 938 carries the post-translational modification Phosphotyrosine; by autocatalysis. Serine 961 bears the Phosphoserine mark.

Belongs to the protein kinase superfamily. Tyr protein kinase family. CSF-1/PDGF receptor subfamily. As to quaternary structure, monomer in the absence of bound KITLG/SCF. Homodimer in the presence of bound KITLG/SCF, forming a heterotetramer with two KITLG/SCF molecules. Interacts (via phosphorylated tyrosine residues) with the adapter proteins GRB2 and GRB7 (via SH2 domain), and SH2B2/APS. Interacts (via C-terminus) with MPDZ (via the tenth PDZ domain). Interacts (via phosphorylated tyrosine residues) with PIK3R1 and PIK3CD. Interacts (via phosphorylated tyrosine) with CRK (isoform Crk-II), FYN, SHC1 and MATK/CHK (via SH2 domain). Interacts with LYN and FES/FPS. Interacts (via phosphorylated tyrosine residues) with the protein phosphatases PTPN6/SHP-1 (via SH2 domain), PTPN11/SHP-2 (via SH2 domain) and PTPRU. Interacts with PLCG1. Interacts with DOK1 and TEC. Interacts with IL1RAP (independent of stimulation with KITLG/SCF). A mast cell-specific KITLG/SCF-induced interleukin-33 signaling complex contains IL1RL1, IL1RAP, KIT and MYD88. Ubiquitinated by SOCS6. KIT is rapidly ubiquitinated after autophosphorylation induced by KITLG/SCF binding, leading to internalization and degradation. Post-translationally, autophosphorylated on tyrosine residues. KITLG/SCF binding promotes autophosphorylation. Phosphorylated tyrosine residues are important for interaction with specific binding partners.

The protein localises to the cell membrane. The enzyme catalyses L-tyrosyl-[protein] + ATP = O-phospho-L-tyrosyl-[protein] + ADP + H(+). With respect to regulation, present in an inactive conformation in the absence of bound ligand. KITLG/SCF binding leads to dimerization and activation by autophosphorylation on tyrosine residues. Activity is down-regulated by PRKCA-mediated phosphorylation on serine residues. Its function is as follows. Tyrosine-protein kinase that acts as a cell-surface receptor for the cytokine KITLG/SCF and plays an essential role in the regulation of cell survival and proliferation, hematopoiesis, stem cell maintenance, gametogenesis, mast cell development, migration and function, and in melanogenesis. In response to KITLG/SCF binding, KIT can activate several signaling pathways. Phosphorylates PIK3R1, PLCG1, SH2B2/APS and CBL. Activates the AKT1 signaling pathway by phosphorylation of PIK3R1, the regulatory subunit of phosphatidylinositol 3-kinase. Activated KIT also transmits signals via GRB2 and activation of RAS, RAF1 and the MAP kinases MAPK1/ERK2 and/or MAPK3/ERK1. Promotes activation of STAT family members STAT1, STAT3, STAT5A and STAT5B. Activation of PLCG1 leads to the production of the cellular signaling molecules diacylglycerol and inositol 1,4,5-trisphosphate. KIT signaling is modulated by protein phosphatases, and by rapid internalization and degradation of the receptor. Activated KIT promotes phosphorylation of the protein phosphatases PTPN6/SHP-1 and PTPRU, and of the transcription factors STAT1, STAT3, STAT5A and STAT5B. Promotes phosphorylation of PIK3R1, CBL, CRK (isoform Crk-II), LYN, MAPK1/ERK2 and/or MAPK3/ERK1, PLCG1, SRC and SHC1. The chain is Mast/stem cell growth factor receptor Kit (KIT) from Capra hircus (Goat).